A 100-amino-acid chain; its full sequence is Large ribosomal subunit protein uL23 (100 aa).

It belongs to the universal ribosomal protein uL23 family. Part of the 50S ribosomal subunit. Contacts protein L29, and trigger factor when it is bound to the ribosome.

Functionally, one of the early assembly proteins it binds 23S rRNA. One of the proteins that surrounds the polypeptide exit tunnel on the outside of the ribosome. Forms the main docking site for trigger factor binding to the ribosome. This Thermotoga sp. (strain RQ2) protein is Large ribosomal subunit protein uL23.